Consider the following 310-residue polypeptide: Protein BIG GRAIN 1 (310 aa).

Positions 81–141 (RAPGPHATTS…KKAKKPGASI (61 aa)) are disordered. The span at 90–106 (SSSSECSSYGGFSSSEA) shows a compositional bias: low complexity.

Belongs to the BIG GRAIN 1 (BG1) plant protein family.

The protein localises to the cell membrane. Its function is as follows. Involved in auxin transport. Positive regulator of the auxin signaling pathway involved in gravitropism, plant growth and grain development. This is Protein BIG GRAIN 1 from Oryza sativa subsp. indica (Rice).